We begin with the raw amino-acid sequence, 72 residues long: DNA-directed RNA polymerase subunit omega (72 aa).

This sequence belongs to the RNA polymerase subunit omega family. In terms of assembly, the RNAP catalytic core consists of 2 alpha, 1 beta, 1 beta' and 1 omega subunit. When a sigma factor is associated with the core the holoenzyme is formed, which can initiate transcription.

The enzyme catalyses RNA(n) + a ribonucleoside 5'-triphosphate = RNA(n+1) + diphosphate. Its function is as follows. Promotes RNA polymerase assembly. Latches the N- and C-terminal regions of the beta' subunit thereby facilitating its interaction with the beta and alpha subunits. This Clostridium beijerinckii (strain ATCC 51743 / NCIMB 8052) (Clostridium acetobutylicum) protein is DNA-directed RNA polymerase subunit omega.